The primary structure comprises 332 residues: Holliday junction branch migration complex subunit RuvB (332 aa).

A large ATPase domain (RuvB-L) region spans residues 1-181 (MARILDNDVM…FGITGHMEYY (181 aa)). Residues leucine 20, arginine 21, glycine 62, lysine 65, threonine 66, threonine 67, 128–130 (EDF), arginine 171, tyrosine 181, and arginine 218 each bind ATP. Threonine 66 contacts Mg(2+). The interval 182–252 (QEKDLTEIVE…ITDRALTMLD (71 aa)) is small ATPAse domain (RuvB-S). Residues 255–332 (REGLDYIDQK…RHLGYPYQNT (78 aa)) form a head domain (RuvB-H) region. Positions 291, 310, 312, and 315 each coordinate DNA.

Belongs to the RuvB family. Homohexamer. Forms an RuvA(8)-RuvB(12)-Holliday junction (HJ) complex. HJ DNA is sandwiched between 2 RuvA tetramers; dsDNA enters through RuvA and exits via RuvB. An RuvB hexamer assembles on each DNA strand where it exits the tetramer. Each RuvB hexamer is contacted by two RuvA subunits (via domain III) on 2 adjacent RuvB subunits; this complex drives branch migration. In the full resolvosome a probable DNA-RuvA(4)-RuvB(12)-RuvC(2) complex forms which resolves the HJ.

It is found in the cytoplasm. It carries out the reaction ATP + H2O = ADP + phosphate + H(+). Its function is as follows. The RuvA-RuvB-RuvC complex processes Holliday junction (HJ) DNA during genetic recombination and DNA repair, while the RuvA-RuvB complex plays an important role in the rescue of blocked DNA replication forks via replication fork reversal (RFR). RuvA specifically binds to HJ cruciform DNA, conferring on it an open structure. The RuvB hexamer acts as an ATP-dependent pump, pulling dsDNA into and through the RuvAB complex. RuvB forms 2 homohexamers on either side of HJ DNA bound by 1 or 2 RuvA tetramers; 4 subunits per hexamer contact DNA at a time. Coordinated motions by a converter formed by DNA-disengaged RuvB subunits stimulates ATP hydrolysis and nucleotide exchange. Immobilization of the converter enables RuvB to convert the ATP-contained energy into a lever motion, pulling 2 nucleotides of DNA out of the RuvA tetramer per ATP hydrolyzed, thus driving DNA branch migration. The RuvB motors rotate together with the DNA substrate, which together with the progressing nucleotide cycle form the mechanistic basis for DNA recombination by continuous HJ branch migration. Branch migration allows RuvC to scan DNA until it finds its consensus sequence, where it cleaves and resolves cruciform DNA. The sequence is that of Holliday junction branch migration complex subunit RuvB from Streptococcus pyogenes serotype M12 (strain MGAS9429).